A 224-amino-acid chain; its full sequence is Heme response regulator HssR (224 aa).

A Response regulatory domain is found at 3–116; that stretch reads NCLIVDDDKK…ELLFRIKAVL (114 aa). At Asp-52 the chain carries 4-aspartylphosphate. Residues 124-222 constitute a DNA-binding region (ompR/PhoB-type); the sequence is DNELQLGNLI…VRGQGYRVDQ (99 aa).

Post-translationally, phosphorylated by HssS.

It localises to the cytoplasm. In terms of biological role, member of the two-component regulatory system HssS/HssR involved in intracellular heme homeostasis and tempering of staphylococcal virulence. Phosphorylated HssR binds to a direct repeat sequence within hrtAB promoter and activates the expression of hrtAB, an efflux pump, in response to extracellular heme, hemin, hemoglobin or blood. This chain is Heme response regulator HssR (hssR), found in Staphylococcus epidermidis (strain ATCC 35984 / DSM 28319 / BCRC 17069 / CCUG 31568 / BM 3577 / RP62A).